We begin with the raw amino-acid sequence, 325 residues long: 7,8-didemethyl-8-hydroxy-5-deazariboflavin synthase (325 aa).

The 241-residue stretch at 1-241 (MTYSKNVFVP…SDIAVQVAPN (241 aa)) folds into the Radical SAM core domain. [4Fe-4S] cluster is bound by residues cysteine 15, cysteine 19, and cysteine 22.

The protein belongs to the radical SAM superfamily. CofG family. In terms of assembly, consists of two subunits, CofG and CofH. It depends on [4Fe-4S] cluster as a cofactor.

The catalysed reaction is 5-amino-5-(4-hydroxybenzyl)-6-(D-ribitylimino)-5,6-dihydrouracil + S-adenosyl-L-methionine = 7,8-didemethyl-8-hydroxy-5-deazariboflavin + 5'-deoxyadenosine + L-methionine + NH4(+) + H(+). The protein operates within cofactor biosynthesis; coenzyme F0 biosynthesis. Catalyzes the radical-mediated synthesis of 7,8-didemethyl-8-hydroxy-5-deazariboflavin from 5-amino-5-(4-hydroxybenzyl)-6-(D-ribitylimino)-5,6-dihydrouracil. The protein is 7,8-didemethyl-8-hydroxy-5-deazariboflavin synthase of Methanosarcina barkeri (strain Fusaro / DSM 804).